Here is a 185-residue protein sequence, read N- to C-terminus: Large ribosomal subunit protein uL22 (185 aa).

A disordered region spans residues 160 to 185 (VSHDDSQKKKVSKKKLARQKEKMMRE).

This sequence belongs to the universal ribosomal protein uL22 family.

This chain is Large ribosomal subunit protein uL22 (RpL17), found in Maconellicoccus hirsutus (Pink hibiscus mealybug).